Consider the following 485-residue polypeptide: Glutamyl-tRNA(Gln) amidotransferase subunit A (485 aa).

Residues K79 and S154 each act as charge relay system in the active site. S178 (acyl-ester intermediate) is an active-site residue.

This sequence belongs to the amidase family. GatA subfamily. As to quaternary structure, heterotrimer of A, B and C subunits.

The catalysed reaction is L-glutamyl-tRNA(Gln) + L-glutamine + ATP + H2O = L-glutaminyl-tRNA(Gln) + L-glutamate + ADP + phosphate + H(+). Its function is as follows. Allows the formation of correctly charged Gln-tRNA(Gln) through the transamidation of misacylated Glu-tRNA(Gln) in organisms which lack glutaminyl-tRNA synthetase. The reaction takes place in the presence of glutamine and ATP through an activated gamma-phospho-Glu-tRNA(Gln). This chain is Glutamyl-tRNA(Gln) amidotransferase subunit A, found in Staphylococcus aureus (strain MRSA252).